Consider the following 253-residue polypeptide: Non-homologous end joining protein Ku (253 aa).

One can recognise a Ku domain in the interval 9–192 (ISFGLVNIPV…EITEEELELA (184 aa)).

Belongs to the prokaryotic Ku family. As to quaternary structure, homodimer. Interacts with LigD.

In terms of biological role, with LigD forms a non-homologous end joining (NHEJ) DNA repair enzyme, which repairs dsDNA breaks with reduced fidelity. Binds linear dsDNA with 5'- and 3'- overhangs but not closed circular dsDNA nor ssDNA. Recruits and stimulates the ligase activity of LigD. The sequence is that of Non-homologous end joining protein Ku from Archaeoglobus fulgidus (strain ATCC 49558 / DSM 4304 / JCM 9628 / NBRC 100126 / VC-16).